The following is an 823-amino-acid chain: Sphingomyelin phosphodiesterase 4 (823 aa).

Ser130 and Ser245 each carry phosphoserine. Thr665 is modified (phosphothreonine). Phosphoserine is present on Ser749. The helical transmembrane segment at 776–796 (LLLLLMAFFVASLFCIGPLSC) threads the bilayer.

Requires Mg(2+) as cofactor. As to expression, expressed in skeletal muscle (at protein level). Expressed in skeletal muscle but a lower levels than isoform 1 (at protein level).

It is found in the endoplasmic reticulum membrane. Its subcellular location is the golgi apparatus membrane. The protein resides in the nucleus envelope. The protein localises to the cell membrane. It localises to the sarcolemma. It carries out the reaction a sphingomyelin + H2O = phosphocholine + an N-acylsphing-4-enine + H(+). With respect to regulation, activated by phosphatidylserine and tumor necrosis factor (TNF). Inhibited by scyphostatin. Catalyzes the hydrolysis of membrane sphingomyelin to form phosphorylcholine and ceramide. It has a relevant role in the homeostasis of membrane sphingolipids, thereby influencing membrane integrity, and endoplasmic reticulum organization and function. May sensitize cells to DNA damage-induced apoptosis. In skeletal muscle, mediates TNF-stimulated oxidant production. The polypeptide is Sphingomyelin phosphodiesterase 4 (Smpd4) (Mus musculus (Mouse)).